The following is a 185-amino-acid chain: Ribosome-recycling factor (185 aa).

This sequence belongs to the RRF family.

It localises to the cytoplasm. Its function is as follows. Responsible for the release of ribosomes from messenger RNA at the termination of protein biosynthesis. May increase the efficiency of translation by recycling ribosomes from one round of translation to another. The polypeptide is Ribosome-recycling factor (Corynebacterium efficiens (strain DSM 44549 / YS-314 / AJ 12310 / JCM 11189 / NBRC 100395)).